A 246-amino-acid polypeptide reads, in one-letter code: Ubiquinone/menaquinone biosynthesis C-methyltransferase UbiE (246 aa).

Residues Thr-75, Asp-95, and 119–120 (DA) contribute to the S-adenosyl-L-methionine site.

This sequence belongs to the class I-like SAM-binding methyltransferase superfamily. MenG/UbiE family.

The catalysed reaction is a 2-demethylmenaquinol + S-adenosyl-L-methionine = a menaquinol + S-adenosyl-L-homocysteine + H(+). It catalyses the reaction a 2-methoxy-6-(all-trans-polyprenyl)benzene-1,4-diol + S-adenosyl-L-methionine = a 5-methoxy-2-methyl-3-(all-trans-polyprenyl)benzene-1,4-diol + S-adenosyl-L-homocysteine + H(+). It participates in quinol/quinone metabolism; menaquinone biosynthesis; menaquinol from 1,4-dihydroxy-2-naphthoate: step 2/2. It functions in the pathway cofactor biosynthesis; ubiquinone biosynthesis. Methyltransferase required for the conversion of demethylmenaquinol (DMKH2) to menaquinol (MKH2) and the conversion of 2-polyprenyl-6-methoxy-1,4-benzoquinol (DDMQH2) to 2-polyprenyl-3-methyl-6-methoxy-1,4-benzoquinol (DMQH2). This chain is Ubiquinone/menaquinone biosynthesis C-methyltransferase UbiE, found in Desulfotalea psychrophila (strain LSv54 / DSM 12343).